A 98-amino-acid polypeptide reads, in one-letter code: Protein translation factor SUI1 homolog (98 aa).

It belongs to the SUI1 family.

The sequence is that of Protein translation factor SUI1 homolog from Pyrococcus furiosus (strain ATCC 43587 / DSM 3638 / JCM 8422 / Vc1).